We begin with the raw amino-acid sequence, 289 residues long: MQGVYPAIITPFKDGKVDYDGLQSNLDFLIENGVSGVIPVGTTGESPTLTPLEHEQVIEKVVEFVDGRVEVIAGTGSNSTSEALEFSQYAEDVGVDGVLLITPYYNKPSQEGLKRHFGEIANSINVPIVLYNVPSRTALNIEPYTIKYLFEEYSNITAIKEANPNLSQVSEVLDSCNIDVLSGNDELTLPIISLGGKGVVSVVANIAPKEFVQMVDFANAGKFDKAKEIHYKLFPLMKLMFIETNPIPIKTAMNMLGMPSGELRLPLCEMAESNKSKLQNALNNLGLLK.

Threonine 43 provides a ligand contact to pyruvate. The Proton donor/acceptor role is filled by tyrosine 131. Lysine 160 acts as the Schiff-base intermediate with substrate in catalysis. Residue valine 200 coordinates pyruvate.

Belongs to the DapA family. As to quaternary structure, homotetramer; dimer of dimers.

It is found in the cytoplasm. The catalysed reaction is L-aspartate 4-semialdehyde + pyruvate = (2S,4S)-4-hydroxy-2,3,4,5-tetrahydrodipicolinate + H2O + H(+). Its pathway is amino-acid biosynthesis; L-lysine biosynthesis via DAP pathway; (S)-tetrahydrodipicolinate from L-aspartate: step 3/4. Functionally, catalyzes the condensation of (S)-aspartate-beta-semialdehyde [(S)-ASA] and pyruvate to 4-hydroxy-tetrahydrodipicolinate (HTPA). This Methanococcus maripaludis (strain C7 / ATCC BAA-1331) protein is 4-hydroxy-tetrahydrodipicolinate synthase.